Here is a 150-residue protein sequence, read N- to C-terminus: Deoxyuridine 5'-triphosphate nucleotidohydrolase (150 aa).

Residues 67-69, Asn-80, and 84-86 each bind substrate; these read RSS and VID.

This sequence belongs to the dUTPase family. Mg(2+) is required as a cofactor.

The enzyme catalyses dUTP + H2O = dUMP + diphosphate + H(+). It functions in the pathway pyrimidine metabolism; dUMP biosynthesis; dUMP from dCTP (dUTP route): step 2/2. Its function is as follows. This enzyme is involved in nucleotide metabolism: it produces dUMP, the immediate precursor of thymidine nucleotides and it decreases the intracellular concentration of dUTP so that uracil cannot be incorporated into DNA. The sequence is that of Deoxyuridine 5'-triphosphate nucleotidohydrolase (dut) from Lactococcus lactis subsp. lactis (strain IL1403) (Streptococcus lactis).